A 409-amino-acid chain; its full sequence is LL-diaminopimelate aminotransferase (409 aa).

2 residues coordinate substrate: Tyr-15 and Gly-42. Pyridoxal 5'-phosphate-binding positions include Tyr-72, 108–109 (AK), Tyr-132, Asn-186, Tyr-217, and 245–247 (SFS). Substrate contacts are provided by Lys-109, Tyr-132, and Asn-186. Position 248 is an N6-(pyridoxal phosphate)lysine (Lys-248). 2 residues coordinate pyridoxal 5'-phosphate: Arg-256 and Asn-291. Substrate-binding residues include Asn-291 and Arg-386.

This sequence belongs to the class-I pyridoxal-phosphate-dependent aminotransferase family. LL-diaminopimelate aminotransferase subfamily. As to quaternary structure, homodimer. The cofactor is pyridoxal 5'-phosphate.

It carries out the reaction (2S,6S)-2,6-diaminopimelate + 2-oxoglutarate = (S)-2,3,4,5-tetrahydrodipicolinate + L-glutamate + H2O + H(+). It functions in the pathway amino-acid biosynthesis; L-lysine biosynthesis via DAP pathway; LL-2,6-diaminopimelate from (S)-tetrahydrodipicolinate (aminotransferase route): step 1/1. In terms of biological role, involved in the synthesis of meso-diaminopimelate (m-DAP or DL-DAP), required for both lysine and peptidoglycan biosynthesis. Catalyzes the direct conversion of tetrahydrodipicolinate to LL-diaminopimelate. The protein is LL-diaminopimelate aminotransferase of Desulforapulum autotrophicum (strain ATCC 43914 / DSM 3382 / VKM B-1955 / HRM2) (Desulfobacterium autotrophicum).